Reading from the N-terminus, the 233-residue chain is Orotidine 5'-phosphate decarboxylase (233 aa).

Residues Asp12, Lys34, 61–70 (DWKLHDIGAT), Thr116, Arg181, Gln190, Gly210, and Arg211 each bind substrate. Residue Lys63 is the Proton donor of the active site.

It belongs to the OMP decarboxylase family. Type 1 subfamily. Homodimer.

The enzyme catalyses orotidine 5'-phosphate + H(+) = UMP + CO2. Its pathway is pyrimidine metabolism; UMP biosynthesis via de novo pathway; UMP from orotate: step 2/2. Functionally, catalyzes the decarboxylation of orotidine 5'-monophosphate (OMP) to uridine 5'-monophosphate (UMP). This chain is Orotidine 5'-phosphate decarboxylase, found in Caulobacter vibrioides (strain ATCC 19089 / CIP 103742 / CB 15) (Caulobacter crescentus).